The primary structure comprises 90 residues: Acyl-CoA-binding protein (90 aa).

The segment covering 1-16 (MGLKEDFEEHAEKAKT) has biased composition (basic and acidic residues). The disordered stretch occupies residues 1 to 20 (MGLKEDFEEHAEKAKTLPEN). The ACB domain maps to 3–88 (LKEDFEEHAE…VKQLLGEAAA (86 aa)). Residues 30-34 (YGLYK), K56, and Y75 each bind an acyl-CoA.

It belongs to the ACBP family.

Its function is as follows. Binds medium- and long-chain acyl-CoA esters with very high affinity and may function as an intracellular carrier of acyl-CoA esters. The protein is Acyl-CoA-binding protein of Ricinus communis (Castor bean).